Here is a 167-residue protein sequence, read N- to C-terminus: Endoribonuclease YbeY (167 aa).

3 residues coordinate Zn(2+): histidine 131, histidine 135, and histidine 141.

The protein belongs to the endoribonuclease YbeY family. It depends on Zn(2+) as a cofactor.

Its subcellular location is the cytoplasm. Functionally, single strand-specific metallo-endoribonuclease involved in late-stage 70S ribosome quality control and in maturation of the 3' terminus of the 16S rRNA. This is Endoribonuclease YbeY from Rickettsia rickettsii (strain Sheila Smith).